Reading from the N-terminus, the 327-residue chain is Mitochondrial coenzyme A transporter SLC25A42 (327 aa).

Solcar repeat units lie at residues 34–120, 132–217, and 227–315; these read KSVL…YKKL, LTPI…LKKL, and PYTF…TQIL. A run of 6 helical transmembrane segments spans residues 36-56, 92-112, 138-158, 192-209, 233-253, and 296-316; these read VLNS…AVAP, LWRG…IQFC, LLAG…LDLV, GFTP…ISFF, LLFG…LDVV, and VKGP…QILL.

This sequence belongs to the mitochondrial carrier (TC 2.A.29) family.

Its subcellular location is the mitochondrion inner membrane. It catalyses the reaction ADP(out) + CoA(in) = ADP(in) + CoA(out). The enzyme catalyses 3'-dephospho-CoA(in) + ADP(out) = 3'-dephospho-CoA(out) + ADP(in). The catalysed reaction is adenosine 3',5'-bisphosphate(in) + ADP(out) = adenosine 3',5'-bisphosphate(out) + ADP(in). It carries out the reaction AMP(in) + ADP(out) = AMP(out) + ADP(in). It catalyses the reaction dADP(in) + ADP(out) = dADP(out) + ADP(in). The enzyme catalyses ADP(in) + ATP(out) = ADP(out) + ATP(in). Functionally, mitochondrial carrier mediating the transport of coenzyme A (CoA) in mitochondria in exchange for intramitochondrial (deoxy)adenine nucleotides and adenosine 3',5'-diphosphate. This is Mitochondrial coenzyme A transporter SLC25A42 (slc25a42) from Xenopus laevis (African clawed frog).